We begin with the raw amino-acid sequence, 496 residues long: Aspartic proteinase (496 aa).

The N-terminal stretch at 1-24 (MAKRHLLLVTTCLWALSCALLLHA) is a signal peptide. Positions 25–59 (SSDGFLRVNLNKKRLDKEDLTAAKLAQQGNRLLKT) are cleaved as a propeptide — activation peptide. The region spanning 77–493 (YYGVIGLGSP…DFGKDRIGFA (417 aa)) is the Peptidase A1 domain. Asp95 is a catalytic residue. Intrachain disulfides connect Cys108–Cys114 and Cys273–Cys277. Asp282 is a catalytic residue. Residues 307–407 (IISTECKEVV…NQLCERLPSP (101 aa)) enclose the Saposin B-type domain. Intrachain disulfides connect Cys312–Cys401, Cys337–Cys373, Cys343–Cys370, and Cys415–Cys452. An N-linked (GlcNAc...) asparagine glycan is attached at Asn387.

Belongs to the peptidase A1 family.

It is found in the vacuole. Functionally, involved in the breakdown of propeptides of storage proteins in protein-storage vacuoles. The polypeptide is Aspartic proteinase (RAP) (Oryza sativa subsp. japonica (Rice)).